The following is a 376-amino-acid chain: Phosphate acyltransferase (376 aa).

Positions 334 to 376 (AGSLEQAKRDAGGPGSASQMASPIAGPVSGQPAEPYSAQSSKA) are disordered.

It belongs to the PlsX family. As to quaternary structure, homodimer. Probably interacts with PlsY.

The protein resides in the cytoplasm. It catalyses the reaction a fatty acyl-[ACP] + phosphate = an acyl phosphate + holo-[ACP]. The protein operates within lipid metabolism; phospholipid metabolism. Its function is as follows. Catalyzes the reversible formation of acyl-phosphate (acyl-PO(4)) from acyl-[acyl-carrier-protein] (acyl-ACP). This enzyme utilizes acyl-ACP as fatty acyl donor, but not acyl-CoA. This Paraburkholderia phymatum (strain DSM 17167 / CIP 108236 / LMG 21445 / STM815) (Burkholderia phymatum) protein is Phosphate acyltransferase.